The primary structure comprises 219 residues: tRNA (guanine-N(7)-)-methyltransferase (219 aa).

S-adenosyl-L-methionine contacts are provided by E46, E71, N100, and D122. D122 is an active-site residue. Substrate-binding positions include K126, D158, and 199–202 (TEYE).

This sequence belongs to the class I-like SAM-binding methyltransferase superfamily. TrmB family.

It catalyses the reaction guanosine(46) in tRNA + S-adenosyl-L-methionine = N(7)-methylguanosine(46) in tRNA + S-adenosyl-L-homocysteine. The protein operates within tRNA modification; N(7)-methylguanine-tRNA biosynthesis. Functionally, catalyzes the formation of N(7)-methylguanine at position 46 (m7G46) in tRNA. The chain is tRNA (guanine-N(7)-)-methyltransferase from Leuconostoc mesenteroides subsp. mesenteroides (strain ATCC 8293 / DSM 20343 / BCRC 11652 / CCM 1803 / JCM 6124 / NCDO 523 / NBRC 100496 / NCIMB 8023 / NCTC 12954 / NRRL B-1118 / 37Y).